A 205-amino-acid polypeptide reads, in one-letter code: Listeria nuclear targeted protein A (205 aa).

The first 36 residues, Met-1–Asp-36, serve as a signal peptide directing secretion.

Interacts specifically with host BAHD1.

The protein resides in the secreted. It is found in the host nucleus. Relieves the repression of host cell immune response genes (interferon-stimulated genes) by blocking the recruitment of host BAHD1 to these genes. May modulate interferon-mediated immune response to control bacterial colonization of the host. In Listeria monocytogenes serovar 1/2a (strain ATCC BAA-679 / EGD-e), this protein is Listeria nuclear targeted protein A (lntA).